Reading from the N-terminus, the 471-residue chain is ATP synthase subunit beta (471 aa).

156-163 (GGAGVGKT) lines the ATP pocket.

It belongs to the ATPase alpha/beta chains family. As to quaternary structure, F-type ATPases have 2 components, CF(1) - the catalytic core - and CF(0) - the membrane proton channel. CF(1) has five subunits: alpha(3), beta(3), gamma(1), delta(1), epsilon(1). CF(0) has three main subunits: a(1), b(2) and c(9-12). The alpha and beta chains form an alternating ring which encloses part of the gamma chain. CF(1) is attached to CF(0) by a central stalk formed by the gamma and epsilon chains, while a peripheral stalk is formed by the delta and b chains.

The protein localises to the cell membrane. The catalysed reaction is ATP + H2O + 4 H(+)(in) = ADP + phosphate + 5 H(+)(out). In terms of biological role, produces ATP from ADP in the presence of a proton gradient across the membrane. The catalytic sites are hosted primarily by the beta subunits. This is ATP synthase subunit beta from Macrococcus caseolyticus (strain JCSC5402) (Macrococcoides caseolyticum).